A 265-amino-acid chain; its full sequence is uncharacterized protein (265 aa).

A divalent metal cation is bound by residues His7, His9, Glu94, His130, His155, and Asp205.

Belongs to the metallo-dependent hydrolases superfamily. TatD-type hydrolase family. A divalent metal cation is required as a cofactor.

This is an uncharacterized protein from Escherichia coli O157:H7.